The chain runs to 445 residues: Argininosuccinate synthase (445 aa).

Residues 17–25 (AFSGGLDTS) and Ala43 contribute to the ATP site. Position 99 (Tyr99) interacts with L-citrulline. Positions 129 and 131 each coordinate ATP. L-aspartate contacts are provided by Thr131, Asn135, and Asp136. Asn135 contributes to the L-citrulline binding site. Asp136 provides a ligand contact to ATP. L-citrulline is bound by residues Arg139 and Ser192. Asp194 lines the ATP pocket. L-citrulline is bound by residues Thr201, Glu203, and Glu280.

It belongs to the argininosuccinate synthase family. Type 2 subfamily. In terms of assembly, homotetramer.

It localises to the cytoplasm. The catalysed reaction is L-citrulline + L-aspartate + ATP = 2-(N(omega)-L-arginino)succinate + AMP + diphosphate + H(+). The protein operates within amino-acid biosynthesis; L-arginine biosynthesis; L-arginine from L-ornithine and carbamoyl phosphate: step 2/3. The sequence is that of Argininosuccinate synthase from Bradyrhizobium sp. (strain BTAi1 / ATCC BAA-1182).